Here is a 380-residue protein sequence, read N- to C-terminus: Putative heat stress transcription factor B-4a (380 aa).

The tract at residues 216–245 (LLRGNAALVQELAHMRKLYSDIIYFVQNHV) is hydrophobic repeat HR-A/B. Disordered regions lie at residues 268-296 (PAGG…TVAE) and 314-380 (INEV…VSPP). Low complexity predominate over residues 278 to 296 (VRGASGRSATSSSSLTVAE). The Nuclear localization signal signature appears at 346–348 (RKR).

Belongs to the HSF family. Class B subfamily. Homotrimer. Post-translationally, exhibits temperature-dependent phosphorylation.

It localises to the nucleus. Functionally, transcriptional regulator that specifically binds DNA of heat shock promoter elements (HSE). In Oryza sativa subsp. japonica (Rice), this protein is Putative heat stress transcription factor B-4a (HSFB4A).